Reading from the N-terminus, the 434-residue chain is Enolase (434 aa).

Residue Gln163 participates in (2R)-2-phosphoglycerate binding. The Proton donor role is filled by Glu205. Residues Asp242, Glu291, and Asp318 each coordinate Mg(2+). (2R)-2-phosphoglycerate is bound by residues Lys343, Arg372, Ser373, and Lys394. The active-site Proton acceptor is the Lys343.

This sequence belongs to the enolase family. Requires Mg(2+) as cofactor.

It is found in the cytoplasm. The protein resides in the secreted. It localises to the cell surface. The catalysed reaction is (2R)-2-phosphoglycerate = phosphoenolpyruvate + H2O. It participates in carbohydrate degradation; glycolysis; pyruvate from D-glyceraldehyde 3-phosphate: step 4/5. Its function is as follows. Catalyzes the reversible conversion of 2-phosphoglycerate (2-PG) into phosphoenolpyruvate (PEP). It is essential for the degradation of carbohydrates via glycolysis. This Streptococcus intermedius protein is Enolase.